We begin with the raw amino-acid sequence, 711 residues long: DNA topoisomerase 3 (711 aa).

In terms of domain architecture, Toprim spans 2–135; that stretch reads KSLILAEKPS…IRRLWISSVT (134 aa). Mg(2+) contacts are provided by Glu-8 and Asp-104. A Topo IA-type catalytic domain is found at 152–580; sequence YNDLYYAALA…EMKDFTKDVV (429 aa). The interaction with DNA stretch occupies residues 186–191; sequence SLGRVQ. The active-site O-(5'-phospho-DNA)-tyrosine intermediate is Tyr-305. The segment at 691–711 is disordered; that stretch reads MNKNEGLDNNPFKDALKNLNL.

The protein belongs to the type IA topoisomerase family. Mg(2+) is required as a cofactor.

The enzyme catalyses ATP-independent breakage of single-stranded DNA, followed by passage and rejoining.. Releases the supercoiling and torsional tension of DNA, which is introduced during the DNA replication and transcription, by transiently cleaving and rejoining one strand of the DNA duplex. Introduces a single-strand break via transesterification at a target site in duplex DNA. The scissile phosphodiester is attacked by the catalytic tyrosine of the enzyme, resulting in the formation of a DNA-(5'-phosphotyrosyl)-enzyme intermediate and the expulsion of a 3'-OH DNA strand. The free DNA strand then undergoes passage around the unbroken strand, thus removing DNA supercoils. Finally, in the religation step, the DNA 3'-OH attacks the covalent intermediate to expel the active-site tyrosine and restore the DNA phosphodiester backbone. This is DNA topoisomerase 3 from Staphylococcus aureus (strain Mu50 / ATCC 700699).